The primary structure comprises 316 residues: Ornithine carbamoyltransferase (316 aa).

Residues 59–62 (STRT), glutamine 86, arginine 110, and 137–140 (HPCQ) each bind carbamoyl phosphate. L-ornithine-binding positions include asparagine 168, aspartate 232, and 236 to 237 (SM). Residues 273–274 (CL) and arginine 301 contribute to the carbamoyl phosphate site.

This sequence belongs to the aspartate/ornithine carbamoyltransferase superfamily. OTCase family.

Its subcellular location is the cytoplasm. The catalysed reaction is carbamoyl phosphate + L-ornithine = L-citrulline + phosphate + H(+). The protein operates within amino-acid biosynthesis; L-arginine biosynthesis; L-arginine from L-ornithine and carbamoyl phosphate: step 1/3. Functionally, reversibly catalyzes the transfer of the carbamoyl group from carbamoyl phosphate (CP) to the N(epsilon) atom of ornithine (ORN) to produce L-citrulline. The protein is Ornithine carbamoyltransferase of Listeria innocua serovar 6a (strain ATCC BAA-680 / CLIP 11262).